The following is a 543-amino-acid chain: CTP synthase (543 aa).

The tract at residues 1–265 (MTNYIFVTGG…DELVVQRFGL (265 aa)) is amidoligase domain. Ser-13 provides a ligand contact to CTP. Position 13 (Ser-13) interacts with UTP. ATP contacts are provided by residues 14-19 (SLGKGI) and Asp-71. Mg(2+) is bound by residues Asp-71 and Glu-139. Residues 146 to 148 (DIE), 186 to 191 (KTKPTQ), and Lys-222 contribute to the CTP site. UTP contacts are provided by residues 186–191 (KTKPTQ) and Lys-222. Position 238 to 240 (238 to 240 (KDA)) interacts with ATP. Residues 290–541 (TIGMVGKYVE…VKAAGEYYKN (252 aa)) enclose the Glutamine amidotransferase type-1 domain. Residue Gly-351 participates in L-glutamine binding. Residue Cys-378 is the Nucleophile; for glutamine hydrolysis of the active site. L-glutamine contacts are provided by residues 379–382 (LGMQ), Glu-402, and Arg-469. Catalysis depends on residues His-514 and Glu-516.

Belongs to the CTP synthase family. As to quaternary structure, homotetramer.

The enzyme catalyses UTP + L-glutamine + ATP + H2O = CTP + L-glutamate + ADP + phosphate + 2 H(+). It catalyses the reaction L-glutamine + H2O = L-glutamate + NH4(+). It carries out the reaction UTP + NH4(+) + ATP = CTP + ADP + phosphate + 2 H(+). It participates in pyrimidine metabolism; CTP biosynthesis via de novo pathway; CTP from UDP: step 2/2. Its activity is regulated as follows. Allosterically activated by GTP, when glutamine is the substrate; GTP has no effect on the reaction when ammonia is the substrate. The allosteric effector GTP functions by stabilizing the protein conformation that binds the tetrahedral intermediate(s) formed during glutamine hydrolysis. Inhibited by the product CTP, via allosteric rather than competitive inhibition. Functionally, catalyzes the ATP-dependent amination of UTP to CTP with either L-glutamine or ammonia as the source of nitrogen. Regulates intracellular CTP levels through interactions with the four ribonucleotide triphosphates. The polypeptide is CTP synthase (Pseudoalteromonas atlantica (strain T6c / ATCC BAA-1087)).